The chain runs to 693 residues: Polyribonucleotide nucleotidyltransferase (693 aa).

Mg(2+) contacts are provided by aspartate 487 and aspartate 493. The KH domain occupies 554 to 613; sequence PRIYTIKINPEKIKDVIGKGGSIIRMLTEETGTVIEIKDDGIVKISAINGEKAKYAIKRI. Residues 623 to 691 enclose the S1 motif domain; that stretch reads GKIYSGKVTR…RQGRIRLSMK (69 aa).

This sequence belongs to the polyribonucleotide nucleotidyltransferase family. As to quaternary structure, component of the RNA degradosome, which is a multiprotein complex involved in RNA processing and mRNA degradation. Mg(2+) is required as a cofactor.

It is found in the cytoplasm. It carries out the reaction RNA(n+1) + phosphate = RNA(n) + a ribonucleoside 5'-diphosphate. Its function is as follows. Involved in mRNA degradation. Catalyzes the phosphorolysis of single-stranded polyribonucleotides processively in the 3'- to 5'-direction. This chain is Polyribonucleotide nucleotidyltransferase, found in Buchnera aphidicola subsp. Cinara cedri (strain Cc).